The primary structure comprises 201 residues: Potassium-transporting ATPase KdpC subunit (201 aa).

The chain crosses the membrane as a helical span at residues 7-27; it reads PAFVVLIALTALTGLAYPLAM.

This sequence belongs to the KdpC family. In terms of assembly, the system is composed of three essential subunits: KdpA, KdpB and KdpC.

The protein localises to the cell inner membrane. Its function is as follows. Part of the high-affinity ATP-driven potassium transport (or Kdp) system, which catalyzes the hydrolysis of ATP coupled with the electrogenic transport of potassium into the cytoplasm. This subunit acts as a catalytic chaperone that increases the ATP-binding affinity of the ATP-hydrolyzing subunit KdpB by the formation of a transient KdpB/KdpC/ATP ternary complex. This Xanthobacter autotrophicus (strain ATCC BAA-1158 / Py2) protein is Potassium-transporting ATPase KdpC subunit.